The sequence spans 162 residues: Small ribosomal subunit protein bS16 (162 aa).

Residues A113 to S162 form a disordered region. A compositionally biased stretch (basic residues) spans P124–A134.

The protein belongs to the bacterial ribosomal protein bS16 family.

This chain is Small ribosomal subunit protein bS16, found in Mycobacterium tuberculosis (strain ATCC 25177 / H37Ra).